A 265-amino-acid polypeptide reads, in one-letter code: Imidazole glycerol phosphate synthase subunit HisF (265 aa).

Catalysis depends on residues Asp17 and Asp136.

The protein belongs to the HisA/HisF family. Heterodimer of HisH and HisF.

It is found in the cytoplasm. The catalysed reaction is 5-[(5-phospho-1-deoxy-D-ribulos-1-ylimino)methylamino]-1-(5-phospho-beta-D-ribosyl)imidazole-4-carboxamide + L-glutamine = D-erythro-1-(imidazol-4-yl)glycerol 3-phosphate + 5-amino-1-(5-phospho-beta-D-ribosyl)imidazole-4-carboxamide + L-glutamate + H(+). Its pathway is amino-acid biosynthesis; L-histidine biosynthesis; L-histidine from 5-phospho-alpha-D-ribose 1-diphosphate: step 5/9. In terms of biological role, IGPS catalyzes the conversion of PRFAR and glutamine to IGP, AICAR and glutamate. The HisF subunit catalyzes the cyclization activity that produces IGP and AICAR from PRFAR using the ammonia provided by the HisH subunit. The protein is Imidazole glycerol phosphate synthase subunit HisF of Mycolicibacterium paratuberculosis (strain ATCC BAA-968 / K-10) (Mycobacterium paratuberculosis).